A 236-amino-acid chain; its full sequence is H2HPP isomerase (236 aa).

Cupin type-2 domains follow at residues 40–106 and 151–215; these read YVPP…AIDI and NIPG…SKSV. 8 residues coordinate a divalent metal cation: His-50, His-52, Gln-56, His-91, His-162, His-164, Gln-168, and His-202. Tyr-223 contacts substrate.

Monomer. Requires Fe(2+) as cofactor. Co(2+) serves as cofactor.

The protein resides in the cytoplasm. It carries out the reaction 3-[(4R)-4-hydroxycyclohexa-1,5-dien-1-yl]-2-oxopropanoate = 3-[(1E,4R)-4-hydroxycyclohex-2-en-1-ylidene]pyruvate. Its pathway is antibiotic biosynthesis; bacilysin biosynthesis. Part of the bacABCDEF operon responsible for the biosynthesis of the nonribosomally synthesized dipeptide antibiotic bacilysin, composed of L-alanine and L-anticapsin. Bacilysin is an irreversible inactivator of the glutaminase domain of glucosamine synthetase. BacB catalyzes the allylic isomerization of the endocyclic-delta(4),delta(8)-7R-dihydro-hydroxyphenylpyruvate (en-H2HPP) to generate a mixture of 3E,7R- and 3Z, 7R-olefins of the exocyclic-delta(3),delta(5)-dihydro-hydroxyphenylpyruvate (ex-H2HPP). This Bacillus amyloliquefaciens (Bacillus velezensis) protein is H2HPP isomerase.